The primary structure comprises 2056 residues: E3 ubiquitin-protein ligase TRIP12 (2056 aa).

Composition is skewed to polar residues over residues 1–10 and 18–27; these read MSSRPNNNPG and RNTAGAQPQE. The disordered stretch occupies residues 1-440; the sequence is MSSRPNNNPG…SGESESDDSE (440 aa). The segment covering 39–51 has biased composition (basic and acidic residues); it reads AENKTHSLPESRK. Composition is skewed to polar residues over residues 58–67 and 153–168; these read KVQSNTTSGP and SQEQPFPSASLPSTSK. Composition is skewed to low complexity over residues 213–226 and 234–253; these read LSKLASKSATSAKA and SSSSASTSSSSSAVASVSAA. Composition is skewed to polar residues over residues 317-327 and 363-375; these read PGSSKTETSKP and QKTTGSCASTSRR. Over residues 383–395 the composition is skewed to basic and acidic residues; the sequence is AAAEARRQEKMAD. Residues 415-433 show a composition bias toward low complexity; sequence GAAASSSVAGAVGMTTSGE. Residues 791 to 905 enclose the WWE domain; the sequence is MLKKGNAQNT…DPELAKSFIK (115 aa). The segment covering 1027-1042 has biased composition (low complexity); it reads TTISTGSGTASGNSAA. Disordered regions lie at residues 1027-1147, 1465-1500, and 1632-1651; these read TTIS…ASKD, EEEESAKDTVGGKRGRAQTAPTKTSPRNSKKHDELW, and TNPEINQSDSQDSRVAPRLD. Over residues 1069 to 1082 the composition is skewed to basic residues; the sequence is KRKRLPKRGPRRPK. Basic and acidic residues predominate over residues 1085–1094; it reads PPRDEDKVDN. Polar residues-rich tracts occupy residues 1095–1106 and 1119–1129; these read QAKSPTTTQSPK and RLSTQSNSNNI. The tract at residues 1560–1634 is K-box; the sequence is EIIPTSEFNN…AMQRLLDTNP (75 aa). The HECT domain occupies 1949–2056; that stretch reads PDHGYTHDSR…REGQQSFHLS (108 aa). Residue cysteine 2023 is the Glycyl thioester intermediate of the active site.

It belongs to the UPL family. K-HECT subfamily.

Its subcellular location is the nucleus. It is found in the nucleoplasm. The catalysed reaction is S-ubiquitinyl-[E2 ubiquitin-conjugating enzyme]-L-cysteine + [acceptor protein]-L-lysine = [E2 ubiquitin-conjugating enzyme]-L-cysteine + N(6)-ubiquitinyl-[acceptor protein]-L-lysine.. It participates in protein modification; protein ubiquitination. E3 ubiquitin-protein ligase involved in ubiquitin fusion degradation (UFD) pathway and regulation of DNA repair. Part of the ubiquitin fusion degradation (UFD) pathway, a process that mediates ubiquitination of protein at their N-terminus, regardless of the presence of lysine residues in target proteins. Acts as a key regulator of DNA damage response by acting as a suppressor of RNF168, an E3 ubiquitin-protein ligase that promotes accumulation of 'Lys-63'-linked histone H2A and H2AX at DNA damage sites, thereby acting as a guard against excessive spreading of ubiquitinated chromatin at damaged chromosomes. The chain is E3 ubiquitin-protein ligase TRIP12 (trip12) from Xenopus tropicalis (Western clawed frog).